Consider the following 199-residue polypeptide: Melanocortin-2 receptor accessory protein 2B (199 aa).

The N-linked (GlcNAc...) asparagine glycan is linked to N6. A helical membrane pass occupies residues 39–59; that stretch reads IVIGFWVGLAVFVIFMFFVLT.

Belongs to the MRAP family. As to quaternary structure, interacts with mc4r. Expressed in adult brain.

It localises to the cell membrane. Its subcellular location is the endoplasmic reticulum membrane. Functionally, activator of melanocortin receptor 4 (mc4r), a receptor involved in energy homeostasis. Plays a role after larval development in the control of energy homeostasis and body weight regulation by increasing ligand-sensitivity of mc4r and mc4r-mediated generation of cAMP once the zebrafish begins feeding, increasing the capacity for regulated feeding and growth. The protein is Melanocortin-2 receptor accessory protein 2B (mrap2b) of Danio rerio (Zebrafish).